Consider the following 31-residue polypeptide: Cytochrome b6-f complex subunit 6 (31 aa).

A helical membrane pass occupies residues 4-26 (IVSYFGFLLTASTITPALFIGLS).

Belongs to the PetL family. As to quaternary structure, the 4 large subunits of the cytochrome b6-f complex are cytochrome b6, subunit IV (17 kDa polypeptide, PetD), cytochrome f and the Rieske protein, while the 4 small subunits are PetG, PetL, PetM and PetN. The complex functions as a dimer.

The protein resides in the plastid. It localises to the chloroplast thylakoid membrane. Component of the cytochrome b6-f complex, which mediates electron transfer between photosystem II (PSII) and photosystem I (PSI), cyclic electron flow around PSI, and state transitions. PetL is important for photoautotrophic growth as well as for electron transfer efficiency and stability of the cytochrome b6-f complex. This chain is Cytochrome b6-f complex subunit 6, found in Nymphaea alba (White water-lily).